Consider the following 299-residue polypeptide: MTKIKIVVIVGPTAVGKTALGISLAKAFNGEIISGDSQQVYRQLDIGTAKATQEEQEAAVHHLTDIREVTESYSAYDFVQDAQKAISDIVSRGKLPIIVGGTGLYLQSLLEGYHLGGQVDQEAVKAYRNELEQLDDHDLYERLQVNNITIEQVNRRRAIRALELAQFADELENAETAYEPLIIGLNDDRQVIYDRINQRVDRMLENGLLEEAKWLYEHYPTVQASRGIGYKELFPYFVGEMTLAEASDQLKQNTRRFAKRQLTWFRNRMAVSFTAITAPDYPQVVHDRVRDFLGQKEKS.

Position 11–18 (11–18 (GPTAVGKT)) interacts with ATP. Substrate is bound at residue 13-18 (TAVGKT). Residues 36–39 (DSQQ) form an interaction with substrate tRNA region.

The protein belongs to the IPP transferase family. In terms of assembly, monomer. The cofactor is Mg(2+).

It carries out the reaction adenosine(37) in tRNA + dimethylallyl diphosphate = N(6)-dimethylallyladenosine(37) in tRNA + diphosphate. Functionally, catalyzes the transfer of a dimethylallyl group onto the adenine at position 37 in tRNAs that read codons beginning with uridine, leading to the formation of N6-(dimethylallyl)adenosine (i(6)A). This chain is tRNA dimethylallyltransferase, found in Streptococcus pyogenes serotype M28 (strain MGAS6180).